The primary structure comprises 431 residues: Transposase for insertion sequence element IS232 (431 aa).

In terms of domain architecture, HTH IS21-type spans 20-79 (PNFKKLMGNLKMKINKSQLARELNVDRRTIDKYLNGFTPKGTKNKTSKIDTYYEVIAALL). A DNA-binding region (H-T-H motif) is located at residues 35-54 (KSQLARELNVDRRTIDKYLN). Residues 140–315 (YETPPGEQAQ…IPVFALKQEK (176 aa)) form the Integrase catalytic domain.

Belongs to the transposase IS21/IS408/IS1162 family.

Its function is as follows. Involved in the transposition of the insertion sequence. The protein is Transposase for insertion sequence element IS232 of Bacillus thuringiensis subsp. berliner.